Reading from the N-terminus, the 120-residue chain is Large ribosomal subunit protein uL18 (120 aa).

It belongs to the universal ribosomal protein uL18 family. As to quaternary structure, part of the 50S ribosomal subunit; part of the 5S rRNA/L5/L18/L25 subcomplex. Contacts the 5S and 23S rRNAs.

Functionally, this is one of the proteins that bind and probably mediate the attachment of the 5S RNA into the large ribosomal subunit, where it forms part of the central protuberance. The chain is Large ribosomal subunit protein uL18 from Allorhizobium ampelinum (strain ATCC BAA-846 / DSM 112012 / S4) (Agrobacterium vitis (strain S4)).